A 950-amino-acid chain; its full sequence is Voltage-gated inwardly rectifying potassium channel KCNH6 (950 aa).

At 1-261 (MPVRRGHVAP…YSPFKAVWDW (261 aa)) the chain is on the cytoplasmic side. Residues 41 to 70 (IIYCNDGFCELFGYSRVEVMQRPCTCDFLT) form the PAS domain. The PAC domain occupies 92 to 144 (CKVDILYYRKDASSFRCLVDVVPVKNEDGAVIMFILNFEDLAQLLAKSSSRSL). The tract at residues 154–174 (LGSEGSHSRPSGQGPGPGRGK) is disordered. The helical transmembrane segment at 262-282 (LILLLVIYTAVFTPYSAAFLL) threads the bilayer. The Extracellular portion of the chain corresponds to 283–298 (SDQDESQRGTCGYTCS). A helical membrane pass occupies residues 299–319 (PLTVVDLIVDIMFVVDIVINF). Topologically, residues 320-340 (RTTYVNTNDEVVSHPRRIAVH) are cytoplasmic. Residues 341 to 361 (YFKGWFLIDMVAAIPFDLLIF) traverse the membrane as a helical segment. The Extracellular portion of the chain corresponds to 362 to 370 (RTGSDETTT). A helical; Voltage-sensor transmembrane segment spans residues 371 to 391 (LIGLLKTARLLRLVRVARKLD). At 392 to 398 (RYSEYGA) the chain is on the cytoplasmic side. The chain crosses the membrane as a helical span at residues 399 to 419 (AVLFLLMCTFALIAHWLACIW). The Extracellular portion of the chain corresponds to 420–463 (YAIGNVERPYLEPKIGWLDSLGAQLGKQYNGSDPASGPSVQDKY). Residues 464–484 (VTALYFTFSSLTSVGFGNVSP) constitute an intramembrane region (pore-forming). Residues 476 to 481 (SVGFGN) carry the Selectivity filter motif. The Extracellular portion of the chain corresponds to 485-490 (NTNSEK). The chain crosses the membrane as a helical span at residues 491-511 (VFSICVMLIGSLMYASIFGNV). Residues 512-950 (SAIIQRLYSG…HGSDPGFTRS (439 aa)) lie on the Cytoplasmic side of the membrane. The cNMP-binding domain stretch occupies residues 594 to 694 (AFRGASKGCL…IHRADLLEVL (101 aa)). 2 disordered regions span residues 719 to 750 (GGLQ…APSL) and 890 to 950 (VPSS…FTRS). Positions 740 to 750 (NDSQSGAAPSL) are enriched in polar residues. Residues 898–912 (PGGLLSPLASPLRPL) are compositionally biased toward low complexity.

Belongs to the potassium channel family. H (Eag) (TC 1.A.1.20) subfamily. Kv11.2/KCNH6 sub-subfamily. The potassium channel is probably composed of a homo- or heterotetrameric complex of pore-forming alpha subunits that can associate only within their subfamily. In terms of tissue distribution, highly expressed in celiac and superior mesenteric ganglia, but not detected in brain or in heart. Detected at low levels in retina. Also found in pituitary. Also found in the olfactory bulb (granular and mitral cell layers).

It localises to the cell membrane. It catalyses the reaction K(+)(in) = K(+)(out). Its function is as follows. Pore-forming (alpha) subunit of voltage-gated inwardly rectifying potassium channel. Characterized by unusual gating kinetics by producing relatively small outward currents during membrane depolarization and large inward currents during subsequent repolarization which reflect a rapid inactivation during depolarization and quick recovery from inactivation but slow deactivation (closing) during repolarization. Activates even more slowly than KCNH2. The chain is Voltage-gated inwardly rectifying potassium channel KCNH6 from Rattus norvegicus (Rat).